Here is a 274-residue protein sequence, read N- to C-terminus: Thymidylate synthase (274 aa).

Residue Arg-21 participates in dUMP binding. Residue His-51 participates in (6R)-5,10-methylene-5,6,7,8-tetrahydrofolate binding. Position 123–124 (123–124) interacts with dUMP; the sequence is RR. Cys-156 acts as the Nucleophile in catalysis. DUMP-binding positions include 176–179, Asn-187, and 217–219; these read RSAD and HIY. (6R)-5,10-methylene-5,6,7,8-tetrahydrofolate is bound at residue Asp-179. Ser-273 is a binding site for (6R)-5,10-methylene-5,6,7,8-tetrahydrofolate.

The protein belongs to the thymidylate synthase family. Bacterial-type ThyA subfamily. In terms of assembly, homodimer.

The protein localises to the cytoplasm. It catalyses the reaction dUMP + (6R)-5,10-methylene-5,6,7,8-tetrahydrofolate = 7,8-dihydrofolate + dTMP. It participates in pyrimidine metabolism; dTTP biosynthesis. Its function is as follows. Catalyzes the reductive methylation of 2'-deoxyuridine-5'-monophosphate (dUMP) to 2'-deoxythymidine-5'-monophosphate (dTMP) while utilizing 5,10-methylenetetrahydrofolate (mTHF) as the methyl donor and reductant in the reaction, yielding dihydrofolate (DHF) as a by-product. This enzymatic reaction provides an intracellular de novo source of dTMP, an essential precursor for DNA biosynthesis. This is Thymidylate synthase from Francisella philomiragia subsp. philomiragia (strain ATCC 25017 / CCUG 19701 / FSC 153 / O#319-036).